The chain runs to 362 residues: 3-dehydroquinate synthase (362 aa).

NAD(+) is bound by residues 74-79 (DGEGYK), 108-112 (GVIGD), 132-133 (TT), K145, K154, and 172-175 (TLDT). Residues E187, H250, and H267 each coordinate Zn(2+).

This sequence belongs to the sugar phosphate cyclases superfamily. Dehydroquinate synthase family. The cofactor is Co(2+). Zn(2+) is required as a cofactor. It depends on NAD(+) as a cofactor.

It localises to the cytoplasm. It catalyses the reaction 7-phospho-2-dehydro-3-deoxy-D-arabino-heptonate = 3-dehydroquinate + phosphate. Its pathway is metabolic intermediate biosynthesis; chorismate biosynthesis; chorismate from D-erythrose 4-phosphate and phosphoenolpyruvate: step 2/7. In terms of biological role, catalyzes the conversion of 3-deoxy-D-arabino-heptulosonate 7-phosphate (DAHP) to dehydroquinate (DHQ). In Geobacter sp. (strain M21), this protein is 3-dehydroquinate synthase.